Consider the following 188-residue polypeptide: Elongation factor P (188 aa).

It belongs to the elongation factor P family.

The protein localises to the cytoplasm. It participates in protein biosynthesis; polypeptide chain elongation. Functionally, involved in peptide bond synthesis. Stimulates efficient translation and peptide-bond synthesis on native or reconstituted 70S ribosomes in vitro. Probably functions indirectly by altering the affinity of the ribosome for aminoacyl-tRNA, thus increasing their reactivity as acceptors for peptidyl transferase. This chain is Elongation factor P, found in Bradyrhizobium sp. (strain BTAi1 / ATCC BAA-1182).